A 103-amino-acid chain; its full sequence is Large ribosomal subunit protein bL21 (103 aa).

This sequence belongs to the bacterial ribosomal protein bL21 family. Part of the 50S ribosomal subunit. Contacts protein L20.

This protein binds to 23S rRNA in the presence of protein L20. This Actinobacillus succinogenes (strain ATCC 55618 / DSM 22257 / CCUG 43843 / 130Z) protein is Large ribosomal subunit protein bL21.